The sequence spans 1035 residues: DNA polymerase catalytic subunit (1035 aa).

This sequence belongs to the DNA polymerase type-B family.

It localises to the host nucleus. It carries out the reaction DNA(n) + a 2'-deoxyribonucleoside 5'-triphosphate = DNA(n+1) + diphosphate. In Macaca mulatta (Rhesus macaque), this protein is DNA polymerase catalytic subunit (UL54).